Here is a 98-residue protein sequence, read N- to C-terminus: DNA-binding protein Fis (98 aa).

Positions Gln74–Lys93 form a DNA-binding region, H-T-H motif.

This sequence belongs to the transcriptional regulatory Fis family. As to quaternary structure, homodimer.

Activates ribosomal RNA transcription. Plays a direct role in upstream activation of rRNA promoters. This chain is DNA-binding protein Fis, found in Aeromonas hydrophila subsp. hydrophila (strain ATCC 7966 / DSM 30187 / BCRC 13018 / CCUG 14551 / JCM 1027 / KCTC 2358 / NCIMB 9240 / NCTC 8049).